Consider the following 257-residue polypeptide: Steroid 5-alpha-reductase DET2 (257 aa).

Transmembrane regions (helical) follow at residues 11–31, 47–67, 78–97, 110–130, 151–171, and 200–220; these read FIVFFILVMAFPTFILCQFFT, ISPPIAWAFMESPTLWLTIIV, LAFLLISPYLFHYTNRTIIY, FPLNIAVTAFIFNLLNAYIQS, IGLVIFGSGMLLNIWADGVLL, and IMEWLGWALMTWSWAGLAFFV.

This sequence belongs to the steroid 5-alpha reductase family. Mostly expressed in leaves and hypocotyls and, to a lower extent, in stems, cotyledons, roots, seeds and callus.

The protein localises to the membrane. It carries out the reaction a 3-oxo-5alpha-steroid + NADP(+) = a 3-oxo-Delta(4)-steroid + NADPH + H(+). It participates in plant hormone biosynthesis; brassinosteroid biosynthesis. With respect to regulation, repressed by steroid (4-MA, VG106, PD91, PD17, Finasteride) and non-steroid (AS601811, AFA27, AFA76, AFA131, AFA192) inhibitors; steroid inhibitors are generally more efficient. In terms of biological role, involved in a reduction step in the biosynthesis of the plant steroid, brassinolide (BL). Can use progesterone, testosterone, androstenedione and campestenone as substrate. This is Steroid 5-alpha-reductase DET2 from Solanum lycopersicum (Tomato).